Here is a 456-residue protein sequence, read N- to C-terminus: Iroquois-class homeodomain protein irx-2 (456 aa).

Positions 110–172 form a DNA-binding region, homeobox; TALE-type; sequence DPAYRKNATR…NARRRLKKEN (63 aa). 3 disordered regions span residues 172–214, 246–320, and 434–456; these read NKMT…AEDE, CESG…PASK, and RPTNFESKKDPSEVCTVGVQPYP. 2 stretches are compositionally biased toward basic and acidic residues: residues 192-205 and 246-256; these read GERVKEEQSEKAQD and CESGSESKEKY. Residues 257 to 269 are compositionally biased toward acidic residues; sequence DDDEDEEEGDEED. The segment covering 291 to 318 has biased composition (polar residues); sequence NHQQDGSPRNSNKTSLDNGMSPSSQTPA.

The protein belongs to the TALE/IRO homeobox family. As to expression, expressed in the neural plate in overlapping patterns with other irx members, which all share an anterior border of expression. Also expressed in the placodes. Broadly expressed in the tailbud rhombencephalon (hindbrain). Outside the nervous system and at tailbud stages, expressed in the developing otic vesicle, branchial arches, prospective heart region and pronephros.

It localises to the nucleus. Acts partially redundantly with other irx members in neural patterning. Required for formation of the posterior forebrain, midbrain, hindbrain, and to a lesser extent, spinal cord. Acts early in neural plate development to induce expression of some but not all proneural genes, and specify a neural precursor state. Also up-regulates repressors that prevent neuronal differentiation. Patterns the neuroectoderm in both the anterior/posterior and dorsal/ventral axes. Probably dispensable for pronephric kidney development. This is Iroquois-class homeodomain protein irx-2 from Xenopus tropicalis (Western clawed frog).